A 67-amino-acid polypeptide reads, in one-letter code: uncharacterized protein (67 aa).

A coiled-coil region spans residues Ala17 to Gln47.

This is an uncharacterized protein from Bacillus subtilis (strain 168).